A 461-amino-acid polypeptide reads, in one-letter code: Serine carboxypeptidase-like 45 (461 aa).

An N-terminal signal peptide occupies residues 1–24; the sequence is MSPLQWLTISFALIIFHSLTVSSS. 3 disulfide bridges follow: Cys86-Cys340, Cys243-Cys261, and Cys286-Cys309. N-linked (GlcNAc...) asparagine glycosylation is present at Asn168. Ser177 is a catalytic residue. Asn244 is a glycosylation site (N-linked (GlcNAc...) asparagine). Residues Asp377 and His434 contribute to the active site.

This sequence belongs to the peptidase S10 family. In terms of tissue distribution, ubiquitous.

It localises to the secreted. Its function is as follows. Probable carboxypeptidase. This Arabidopsis thaliana (Mouse-ear cress) protein is Serine carboxypeptidase-like 45 (SCPL45).